A 93-amino-acid chain; its full sequence is Acyl carrier protein AcpXL (93 aa).

Residues 2–88 enclose the Carrier domain; it reads STTFDKVAKI…NLCAKIDALV (87 aa). Ser37 is subject to O-(pantetheine 4'-phosphoryl)serine.

Post-translationally, 4'-phosphopantetheine is transferred from CoA to a specific serine of apo-ACP by AcpS. This modification is essential for activity because fatty acids are bound in thioester linkage to the sulfhydryl of the prosthetic group.

Its subcellular location is the cytoplasm. It participates in glycolipid biosynthesis; KDO(2)-lipid A biosynthesis. Its function is as follows. Carrier of the growing fatty acid chain in fatty acid biosynthesis. Is involved in the transfer of long hydroxylated fatty acids to lipid A. This Mesorhizobium japonicum (strain LMG 29417 / CECT 9101 / MAFF 303099) (Mesorhizobium loti (strain MAFF 303099)) protein is Acyl carrier protein AcpXL (acpXL).